Here is a 107-residue protein sequence, read N- to C-terminus: MKNAFTLLFETIKERKRNPLSESYTNYLFLKGEDKILKKIGEECSEVIIASKNNDKEELVKEMVDVLYHCFVLLVEKNISLEDIMEEVTERNGKLSRVGDRREIDTL.

This sequence belongs to the PRA-PH family.

It localises to the cytoplasm. It catalyses the reaction 1-(5-phospho-beta-D-ribosyl)-ATP + H2O = 1-(5-phospho-beta-D-ribosyl)-5'-AMP + diphosphate + H(+). It functions in the pathway amino-acid biosynthesis; L-histidine biosynthesis; L-histidine from 5-phospho-alpha-D-ribose 1-diphosphate: step 2/9. This is Phosphoribosyl-ATP pyrophosphatase from Bacillus cereus (strain Q1).